Consider the following 304-residue polypeptide: Lipid droplet-associated triacylglycerol lipase (304 aa).

The Lumenal segment spans residues 1-155; it reads MTVKEYTKSK…MGIKMTAALR (155 aa). N-linked (GlcNAc...) asparagine glycosylation is present at N95. Positions 107–111 match the GXSXG motif; it reads GHSVG. The active-site Nucleophile is the S109. The stretch at 156–176 is an intramembrane region; sequence YIPPLAHVVSLFSYIFFYWIL. Residues 177-304 are Lumenal-facing; the sequence is SEGFSRFIID…HAEYAINAFF (128 aa).

This sequence belongs to the AB hydrolase superfamily. LDAH family.

It localises to the lipid droplet. The protein localises to the membrane. It carries out the reaction a triacylglycerol + H2O = a diacylglycerol + a fatty acid + H(+). Its function is as follows. Shows both triacylglycerol (TAG) lipase and ester hydrolase activities. May play a role in TAG homeostasis. The chain is Lipid droplet-associated triacylglycerol lipase from Saccharomyces cerevisiae (strain ATCC 204508 / S288c) (Baker's yeast).